A 99-amino-acid chain; its full sequence is Putative pterin-4-alpha-carbinolamine dehydratase (99 aa).

This sequence belongs to the pterin-4-alpha-carbinolamine dehydratase family.

It carries out the reaction (4aS,6R)-4a-hydroxy-L-erythro-5,6,7,8-tetrahydrobiopterin = (6R)-L-erythro-6,7-dihydrobiopterin + H2O. The protein is Putative pterin-4-alpha-carbinolamine dehydratase of Synechococcus sp. (strain CC9311).